Here is a 153-residue protein sequence, read N- to C-terminus: Xanthine-guanine phosphoribosyltransferase (153 aa).

5-phospho-alpha-D-ribose 1-diphosphate is bound by residues 37–38, R69, and 88–96; these read RG and DDLVDTGGT. R69 is a binding site for GMP. Residue D89 coordinates Mg(2+). Positions 92 and 135 each coordinate guanine. Residues D92 and I135 each contribute to the xanthine site. Residues 92–96 and 134–135 contribute to the GMP site; these read DTGGT and WI.

This sequence belongs to the purine/pyrimidine phosphoribosyltransferase family. XGPT subfamily. In terms of assembly, homotetramer. The cofactor is Mg(2+).

It localises to the cell inner membrane. The enzyme catalyses GMP + diphosphate = guanine + 5-phospho-alpha-D-ribose 1-diphosphate. The catalysed reaction is XMP + diphosphate = xanthine + 5-phospho-alpha-D-ribose 1-diphosphate. It catalyses the reaction IMP + diphosphate = hypoxanthine + 5-phospho-alpha-D-ribose 1-diphosphate. It functions in the pathway purine metabolism; GMP biosynthesis via salvage pathway; GMP from guanine: step 1/1. The protein operates within purine metabolism; XMP biosynthesis via salvage pathway; XMP from xanthine: step 1/1. Its function is as follows. Purine salvage pathway enzyme that catalyzes the transfer of the ribosyl-5-phosphate group from 5-phospho-alpha-D-ribose 1-diphosphate (PRPP) to the N9 position of the 6-oxopurines guanine and xanthine to form the corresponding ribonucleotides GMP (guanosine 5'-monophosphate) and XMP (xanthosine 5'-monophosphate), with the release of PPi. To a lesser extent, also acts on hypoxanthine. The sequence is that of Xanthine-guanine phosphoribosyltransferase from Photorhabdus laumondii subsp. laumondii (strain DSM 15139 / CIP 105565 / TT01) (Photorhabdus luminescens subsp. laumondii).